The chain runs to 335 residues: Tryptophan--tRNA ligase (335 aa).

Residues 11 to 13 and 19 to 20 each bind ATP; these read QPT and GN. The short motif at 12 to 20 is the 'HIGH' region element; sequence PTGNLHLGN. D135 is an L-tryptophan binding site. Residues 147–149, V189, and 198–202 each bind ATP; these read GED and KMSKS. A 'KMSKS' region motif is present at residues 198-202; sequence KMSKS.

This sequence belongs to the class-I aminoacyl-tRNA synthetase family. In terms of assembly, homodimer.

It is found in the cytoplasm. It carries out the reaction tRNA(Trp) + L-tryptophan + ATP = L-tryptophyl-tRNA(Trp) + AMP + diphosphate + H(+). Catalyzes the attachment of tryptophan to tRNA(Trp). This chain is Tryptophan--tRNA ligase, found in Nostoc sp. (strain PCC 7120 / SAG 25.82 / UTEX 2576).